A 102-amino-acid chain; its full sequence is Large ribosomal subunit protein bL21 (102 aa).

This sequence belongs to the bacterial ribosomal protein bL21 family. In terms of assembly, part of the 50S ribosomal subunit. Contacts protein L20.

This protein binds to 23S rRNA in the presence of protein L20. The protein is Large ribosomal subunit protein bL21 of Phytoplasma australiense.